The primary structure comprises 2197 residues: MSSICFAGGNHARLPSKAAYYRAISDRELDREGRFPCGCLAQYTVQAPPPAKTQEKAVGRSADLQKGNVAPLKKQRCDVVVAVSGPPPLELVYPARVGQHRLDQPSKGPLAVPSAKQTSTAMEVVLSVGEAALTAPWLLCSYKSGVSSPPPPMTQRQQFAAIKRRLVQKGQQIIRELIRARKAAKYAAFAARKKAAAVAAQKARAEAPRLAAQKAAIAKILRDRQLVSLPPPPPPSAARLAAEAELASKSASLQRLKAFHRANRVRPVLNNSFPSPPLACKPDPALLERLRLATPSRCTVATKRQRDFVVAPLATQIRVAKCASHQEAYDSCRSILIEEWPESRYLFGPLSFVGDWEHVPGMLMQYRLCVLFSMVRDVMPALSLVADTLHALRSGTAPNIVFKNAMSTANQILECSHSSHAAQGFGNFLSRGKSAAINLASGLSSFVGEKVVSGANHVVNKASEVIVDKLFVPFVKLLREHFDDTIGKWIPKLLGATQKIEELWRWSLEWAQNMSKKLDVSLRVLRGSALVGVGLLLVSGILYFAEQLLRSFGLLIVAGSFISMFVGGCLLAYAGSMAGIFDEQMMRVRGILCEIPMLLYLKAQPDPFFPKKSGGRAPTQGLTDVFGVPLSIMNAIGDGLVHHSLDTLTLMGKFGAAMDNVRKGITCMRSFVSWLMEHLALALDKITGKRTSFFRELATLINFDVEKWVRDSQQYLLAAEIYVDGDTVVMDTCRHLLDKGLKLQRMMVSAKSGCSFNYGRLVGDLVKRLSDLHKRYCASGRRVHYRLAPFWVYLYGGPRCGKSLFAQSFMNAAVDFMGTTVDNCYFKNARDDFWSGYRQEAICCVDDLSSCETQPSIESEFIQLITTMRYGLNMAGVEEKGASFDSKMVITTSNFFTAPTTAKIASKAAYNDRRHACILVQRKEGVAYNPSDPAAAAEAMFVDSTTQHPLSEWMSMQELSAELLLRYQQHREAQHAEYSYWKSTSRTSHDVFDILQKCVNGDTQWLSLPVDVIPPSIRQKHKGNRVFAIDGRIFMFDYMTLEYDEIKEKENLDARHLEARILEKYGDTRLLLEKWGANGVVAQFIEQLLEGPSNVASLEVLSKDSLESHKEFFSTLGLIERATLRAVQKKIDAAREDLMHLSGLKPGRSLTELFVEAYDWVYANGGKLLLVLAAVILILFFGSACIKLMQAIFCGAAGGTVSMAAVGKMTVQSTIPSGSYADVYNARNMTRVFRPQSVQGSSLAEAQFNESHAVNMLVRIDLPDGNIISACRFRGKSLALTKHQALTIPPGAKIHIVYTDNNGNTKAPLTHFFQPTGPNGEHFLRFFNGTEVCIYSHPQLSALPGAPQNYFLKDVEKISGDIAIKGCGIKLGRTSVGECVGVKDNEPVLNHWRAVAKVRTTKITIDNYSEGGDYSNDLPTSIISEYVNSPEDCGALLVAHLEGGYKIIGMHVAGSSYPVEVDGVQMPRYISHASFFPDYSSFAPCQSSVIKSLIQEAGVEERGVSKVGHIKDPAETPHVGGKTKLELVDEAFLVPSPVEVKIPSILSKDDPRIPEAYKGYDPLGDAMEKFYEPMLDLDEDVLESVMADMYDEFYDCQTTLRIMSDDEVINGSDFGFNIEAVVKGTSEGYPFVLSRRPGEKGKARFLEELEPQPGDTKPKYKLVVGTEVHSAMVAMEQQARTEVPLLIGMDVPKDERLKPSKVLEKPKTRTFVVLPMHYNLLLRKYVGILCSSMQVNRHRLACAVGTNPYSRDWTDIYQRLAEKNSVALNCDYSRFDGLLNYQAYVHIVNFINKLYNDEHSIVRGNLLMAMYGRWSVCGQRVFEVRAGMPSGCALTVIINSLFNEMLIRYVYRITVPRPLVNNFKQEVCLIVYGDDNLISIKPDTMKYFNGEQIKTILAKYKVTITDGSDKNSPVLRAKPLKQLDFLKRGFRVESDGRVLAPLDLQAIYSSLYYINPQGNILKSLFLNAQVALRELYLHGDVEQFTAVRNFYVNQIGGNFLSLPQWRHCASFHDEQYSQWKPWSPVKFLEVDVPDAKFLQHKAPATALSIVADRLAVAGPGWRNKDPDRYLLVSLTSLKANEGGLYFPVDYGEGTGQQATEASIRAYRRLKDHRVRHMRDSWNEGKTIVFRCEGPFVSGWAAAISFGTSVGMNAQDLLINYGIQGGAHKEYLGRYFVGARFKELERYDRPFQSRIIAS.

At 621-1167 the chain is on the cytoplasmic side; the sequence is GLTDVFGVPL…YDWVYANGGK (547 aa). Residues 766 to 933 enclose the SF3 helicase domain; that stretch reads VKRLSDLHKR…EGVAYNPSDP (168 aa). 796–803 is an ATP binding site; it reads GGPRCGKS. A helical membrane pass occupies residues 1168-1188; it reads LLLVLAAVILILFFGSACIKL. At 1189–1212 the chain is on the lumenal side; it reads MQAIFCGAAGGTVSMAAVGKMTVQ. N-linked (GlcNAc...) asparagine; by host glycosylation is present at Asn1228. Positions 1243-1475 constitute a Peptidase C3 domain; sequence LAEAQFNESH…MPRYISHASF (233 aa). Residues His1283, Glu1331, and Cys1433 each act as for picornain 3C-like protease activity in the active site. Residues 1765 to 1888 form the RdRp catalytic domain; sequence SVALNCDYSR…SIKPDTMKYF (124 aa).

It belongs to the nepoviruses RNA1 polyprotein family. Specific enzymatic cleavages by picornain 3C-like protease in vivo yield mature proteins. Picornain 3C-like protease is autocatalytically processed. NTB exists as NTB-VPg polyprotein as well as NTB mature protein. Post-translationally, VPg is uridylylated by the polymerase and is covalently linked to the 5'-end of genomic RNA. This uridylylated form acts as a nucleotide-peptide primer for the polymerase.

It localises to the host endoplasmic reticulum lumen. Its subcellular location is the host endoplasmic reticulum membrane. The catalysed reaction is RNA(n) + a ribonucleoside 5'-triphosphate = RNA(n+1) + diphosphate. Its function is as follows. Picornain 3C-like protease is a thiol protease that cleaves at Gln-|-Gly or Gln-|-Ser sites in the P1 and P2 polyproteins. Functionally, the VPg-NTB polyprotein may act as a membrane-anchor for the replication complex. This chain is RNA1 polyprotein, found in Tomato ringspot virus (isolate raspberry) (ToRSV).